Consider the following 406-residue polypeptide: MIKSILDNDLYKFTMQMAVLELFPKAEAEYRFTNRGLQRFSREFVEELRRVIDEEISGLRLTEEEYRWLGEKCPFLKPMYLEYLKNFRFKPEEVEICLTRENDLDMRIKGPWHSTILWEIVLMAAVSELYFTTIEKEWNGSTKNPGTPESATLESVLEAYGEKILEIGKVLEENGCLFSEFGTRRRRSFELHDQVMRSLVRIKTLTGTSNVYFAKKYGVKPIGTVGHEWIMGTSALVGLRYANRFAFENWVDVYNGDLGIALTDTFGSEAFFKDMDLKLSKIYDGFRHDSGDPYTFVDRVIEHYGKMGIDPMKKVIVFSDALNAEAAVKLKKYCEGKINCSFGIGTSLTNNSEFFRESPPLNMVIKLHSINGIPVVKLSDSPEKETGERDALRVANYIVGRKGLDE.

Histidine 227 bears the Phosphohistidine; by autocatalysis mark.

It belongs to the NAPRTase family. Transiently phosphorylated on a His residue during the reaction cycle. Phosphorylation strongly increases the affinity for substrates and increases the rate of nicotinate D-ribonucleotide production. Dephosphorylation regenerates the low-affinity form of the enzyme, leading to product release.

The enzyme catalyses nicotinate + 5-phospho-alpha-D-ribose 1-diphosphate + ATP + H2O = nicotinate beta-D-ribonucleotide + ADP + phosphate + diphosphate. It participates in cofactor biosynthesis; NAD(+) biosynthesis; nicotinate D-ribonucleotide from nicotinate: step 1/1. Catalyzes the synthesis of beta-nicotinate D-ribonucleotide from nicotinate and 5-phospho-D-ribose 1-phosphate at the expense of ATP. In Methanosarcina mazei (strain ATCC BAA-159 / DSM 3647 / Goe1 / Go1 / JCM 11833 / OCM 88) (Methanosarcina frisia), this protein is Nicotinate phosphoribosyltransferase.